A 198-amino-acid chain; its full sequence is dTTP/UTP pyrophosphatase (198 aa).

D76 (proton acceptor) is an active-site residue.

It belongs to the Maf family. YhdE subfamily. A divalent metal cation is required as a cofactor.

The protein localises to the cytoplasm. It catalyses the reaction dTTP + H2O = dTMP + diphosphate + H(+). The enzyme catalyses UTP + H2O = UMP + diphosphate + H(+). In terms of biological role, nucleoside triphosphate pyrophosphatase that hydrolyzes dTTP and UTP. May have a dual role in cell division arrest and in preventing the incorporation of modified nucleotides into cellular nucleic acids. The protein is dTTP/UTP pyrophosphatase of Shewanella denitrificans (strain OS217 / ATCC BAA-1090 / DSM 15013).